Reading from the N-terminus, the 2962-residue chain is Sex determination and dosage compensation protein sdc-2 (2962 aa).

Disordered regions lie at residues 1-28 and 1061-1110; these read MSDE…ADPD and DKRS…QVDP. Acidic residues predominate over residues 15 to 27; it reads SFNESDSPDEADP. Coiled-coil stretches lie at residues 995–1085 and 1140–1268; these read LESA…LADK and REER…KRVS. 2 disordered regions span residues 1535–1554 and 2198–2227; these read PASL…GSPV and LDSS…NQLD. Residues 2212–2225 are compositionally biased toward acidic residues; that stretch reads FEDSPSEDENDENQ.

In terms of assembly, component of the SDC complex, which consists of sdc-1, sdc-2 and sdc-3. Within the complex, interacts with sdc-1 and sdc-3. In terms of tissue distribution, expressed in hermaphrodites (XX), but absent in males (XO) (at protein level).

The protein localises to the chromosome. Its function is as follows. Component of the SDC complex that functions in sex determination and in X chromosome dosage compensation specifically in hermaphrodite (XX) animals. Required for the recruitment of the condensin I-like dosage compensation complex to the male sex-determining autosomal gene her-1, thereby contributing to its repression and initiating hermaphrodite sexual development. Plays a central role in X-chromosome recognition and in the recruitment and assembly of the dosage compensation complex and the dosage compensation protein dpy-21 onto the X chromosomes in hermaphrodites, which leads to a reduction of X-linked gene transcription and an equalization of X-linked gene expression between the sexes. May confer protection against toxicity induced by heavy metals such as arsenite. The sequence is that of Sex determination and dosage compensation protein sdc-2 from Caenorhabditis elegans.